The sequence spans 326 residues: MPGPTQTLSPNGENNNDIIQDNGTIIPFRKHTVRGERSYSWGMAVNVYSTSITQETMSRHDIIAWVNDIVSLNYTKVEQLCSGAAYCQFMDMLFPGCISLKKVKFQAKLEHEYIHNFKLLQASFKRMNVDKVIPVEKLVKGRFQDNLDFIQWFKKFYDANYDGKEYDPVEARQGQDAIPPPDPGEQIFNLPKKSHHANSPTAGAAKSSPASKPGSTPSRPSSAKRASSSGSASRSDKDLETQVIQLNEQVHSLKLALEGVEKERDFYFGKLREIELLCQEHGQENDDLVQRLMDVLYASDEHEGHPEEPEAEEQVHEQQPQQQEEY.

A Phosphoserine modification is found at Ser-9. Positions 56–158 constitute a Calponin-homology (CH) domain; that stretch reads TMSRHDIIAW…FIQWFKKFYD (103 aa). Tyr-166 carries the post-translational modification Phosphotyrosine. Disordered stretches follow at residues 170-239 and 298-326; these read EARQ…DKDL and ASDEHEGHPEEPEAEEQVHEQQPQQQEEY. The segment at 186–326 is DCTN1-binding; it reads QIFNLPKKSH…EQQPQQQEEY (141 aa). A compositionally biased stretch (low complexity) spans 199-233; the sequence is SPTAGAAKSSPASKPGSTPSRPSSAKRASSSGSAS. 2 positions are modified to phosphoserine: Ser-218 and Ser-235. Residues 235–305 enclose the EB1 C-terminal domain; that stretch reads SDKDLETQVI…LYASDEHEGH (71 aa). Residues 258 to 301 are APC-binding; it reads EGVEKERDFYFGKLREIELLCQEHGQENDDLVQRLMDVLYASDE. A compositionally biased stretch (basic and acidic residues) spans 299–316; the sequence is SDEHEGHPEEPEAEEQVH. Residues 317-326 show a composition bias toward low complexity; that stretch reads EQQPQQQEEY.

Belongs to the MAPRE family. Interacts with DCTN1. Interacts with APC (via C-terminal). Interacts with monomeric and polymerized tubulin. Interacts with SLAIN1. Interacts (via the N-terminal region) with BAG1. Interacts with ASB14. Interacts with HAX1; this interaction is essential for epidermal cell migration. Phosphorylated at Ser-235 by CK2 leading to enhanced cell adhesion. Phosphorylated by CDK1 and AURKB during mitosis reduces the binding affinity of MAPRE2 for microtubules. In terms of processing, ubiquitinated in an ASB14-dependent manner; leading to proteasomal degradation.

It is found in the cytoplasm. The protein resides in the cytoskeleton. In terms of biological role, adapter protein that is involved in microtubule polymerization, and spindle function by stabilizing microtubules and anchoring them at centrosomes. Therefore, ensures mitotic progression and genome stability. Acts as a central regulator of microtubule reorganization in apico-basal epithelial differentiation. Plays a role during oocyte meiosis by regulating microtubule dynamics. Participates in neurite growth by interacting with plexin B3/PLXNB3 and microtubule reorganization during apico-basal epithelial differentiation. Also plays an essential role for cell migration and focal adhesion dynamics. Mechanistically, recruits HAX1 to microtubules in order to regulate focal adhesion dynamics. In Bos taurus (Bovine), this protein is Microtubule-associated protein RP/EB family member 2 (MAPRE2).